The following is a 291-amino-acid chain: 4-hydroxy-tetrahydrodipicolinate synthase (291 aa).

Thr-45 contributes to the pyruvate binding site. Residue Tyr-131 is the Proton donor/acceptor of the active site. The active-site Schiff-base intermediate with substrate is the Lys-159. A pyruvate-binding site is contributed by Ile-202.

This sequence belongs to the DapA family. In terms of assembly, homotetramer; dimer of dimers.

It localises to the cytoplasm. The catalysed reaction is L-aspartate 4-semialdehyde + pyruvate = (2S,4S)-4-hydroxy-2,3,4,5-tetrahydrodipicolinate + H2O + H(+). It participates in amino-acid biosynthesis; L-lysine biosynthesis via DAP pathway; (S)-tetrahydrodipicolinate from L-aspartate: step 3/4. Functionally, catalyzes the condensation of (S)-aspartate-beta-semialdehyde [(S)-ASA] and pyruvate to 4-hydroxy-tetrahydrodipicolinate (HTPA). This Methanosarcina acetivorans (strain ATCC 35395 / DSM 2834 / JCM 12185 / C2A) protein is 4-hydroxy-tetrahydrodipicolinate synthase.